A 431-amino-acid polypeptide reads, in one-letter code: MNLDSALAYQSGFGNEFSSEALPGALPVGQNSPQKAPYGLYTELFSGTAFTMTRSEARRTWMYRIQPSANHPAFVKLERQLAGGPLGEVTPNRLRWNPLDLPTEPTDFIDGLVSMAANSGADKPAGISIYHYGANRSMERVFFNADGELLLVPQLGRLRIATELGVLDVAPLEIAVLPRGLKFRVELLDPQARGYVAENHGAPLRLPDLGPIGSNGLANPRDFLTPVAAYENLQQPTTLVQKFLGQLWGTELNHSPLNVVAWHGNNVPYKYDLRRFNTIGTVSFDHPDPSIFTVLTSPTSVHGLANLDFVIFPPRWMVAENTFRPPWFHRNLMNEFMGLIQGEYDAKAEGFVPGGASLHSCMSAHGPDGETCTKAINADLKPAKIDNTMAFMFETSQVLRPSRFALDCPQLQSTYDACWATLPATFDPTRR.

Catalysis depends on His-286, which acts as the Proton acceptor. Residues His-329 and Glu-335 each coordinate Fe cation. Residues Tyr-344 and His-365 each contribute to the homogentisate site. A Fe cation-binding site is contributed by His-365.

This sequence belongs to the homogentisate dioxygenase family. Hexamer; dimer of trimers. Fe cation serves as cofactor.

The catalysed reaction is homogentisate + O2 = 4-maleylacetoacetate + H(+). It functions in the pathway amino-acid degradation; L-phenylalanine degradation; acetoacetate and fumarate from L-phenylalanine: step 4/6. In terms of biological role, involved in the catabolism of homogentisate (2,5-dihydroxyphenylacetate or 2,5-OH-PhAc), a central intermediate in the degradation of phenylalanine and tyrosine. Catalyzes the oxidative ring cleavage of the aromatic ring of homogentisate to yield maleylacetoacetate. In Pseudomonas fluorescens (strain Pf0-1), this protein is Homogentisate 1,2-dioxygenase.